A 496-amino-acid chain; its full sequence is Transmembrane protein 104 (496 aa).

Residues 1 to 10 (MAGEITETGE) lie on the Cytoplasmic side of the membrane. Residues 11–31 (LYSPYVGLVYMFNLIVGTGAL) form a helical membrane-spanning segment. The Extracellular portion of the chain corresponds to 32–36 (TMPKA). Residues 37 to 57 (FATAGWLVSLVLLVFVGFMSF) traverse the membrane as a helical segment. Residues 58–146 (VTTTFAMEAM…SMFFNKVGVN (89 aa)) are Cytoplasmic-facing. A disordered region spans residues 81–100 (THKEEDDEDSSTASDSDLLS). Residues 91–100 (STASDSDLLS) show a composition bias toward low complexity. Residues 147 to 167 (LFYFCIITYLYGDLAIYAAAV) traverse the membrane as a helical segment. Residues 168–204 (PVSLMQVTCSVSGNDSCGVDTDARYNDTDLCWGPLRR) lie on the Extracellular side of the membrane. N193 carries an N-linked (GlcNAc...) asparagine glycan. A helical membrane pass occupies residues 205-225 (VDVYRIYLAIFTVLLGPFTFF). Residues 226–233 (DVQKTKYL) are Cytoplasmic-facing. Residues 234-254 (QILTSMMRWIAFAIMIVLALV) traverse the membrane as a helical segment. Over 255 to 265 (RIGKGQGEGHP) the chain is Extracellular. The chain crosses the membrane as a helical span at residues 266 to 286 (PLANFLGVQNLFGVCVYSFMC). The Cytoplasmic segment spans residues 287–306 (QHSLPSLITPISSKRHITRL). Residues 307–327 (LFLDYALILAFYGLLSFTAIF) form a helical membrane-spanning segment. Topologically, residues 328–354 (CFRGDSLMDMYTLNFARCDVVGLAAVR) are extracellular. The helical transmembrane segment at 355–375 (FFLGLFPVFTISTNFPIIAVT) threads the bilayer. Residues 376-397 (LRNNWKTLFHREGGTYPWVVDR) are Cytoplasmic-facing. Residues 398-418 (VVFPTITLVPPILVAFCTHDL) form a helical membrane-spanning segment. At 419–421 (ESL) the chain is on the extracellular side. Residues 422 to 442 (VAITGAYAGTGIQYVIPAFLV) form a helical membrane-spanning segment. The Cytoplasmic segment spans residues 443–470 (YLCRKDTQLTFGYGTVNKHRSPFRHTFW). Residues 471–491 (VAFVLLWAFSCFFFVTAYIVL) form a helical membrane-spanning segment. Topologically, residues 492–496 (KETQL) are extracellular.

Belongs to the TMEM104 family.

The protein resides in the membrane. This is Transmembrane protein 104 (Tmem104) from Mus musculus (Mouse).